Consider the following 128-residue polypeptide: NADH-quinone oxidoreductase subunit A (128 aa).

The next 3 helical transmembrane spans lie at 5-25 (IPIL…VVIA), 72-92 (LTAM…PWAV), and 100-120 (FALV…AYVW).

This sequence belongs to the complex I subunit 3 family. In terms of assembly, NDH-1 is composed of 14 different subunits. Subunits NuoA, H, J, K, L, M, N constitute the membrane sector of the complex.

The protein localises to the cell membrane. The enzyme catalyses a quinone + NADH + 5 H(+)(in) = a quinol + NAD(+) + 4 H(+)(out). NDH-1 shuttles electrons from NADH, via FMN and iron-sulfur (Fe-S) centers, to quinones in the respiratory chain. The immediate electron acceptor for the enzyme in this species is believed to be a menaquinone. Couples the redox reaction to proton translocation (for every two electrons transferred, four hydrogen ions are translocated across the cytoplasmic membrane), and thus conserves the redox energy in a proton gradient. The sequence is that of NADH-quinone oxidoreductase subunit A from Mycobacterium bovis (strain ATCC BAA-935 / AF2122/97).